A 681-amino-acid chain; its full sequence is Rabphilin-3A (681 aa).

Residues 1-21 (MTDTVVNRWMYPGDGPLQSND) form a disordered region. The region spanning 40 to 157 (QRKQEELTDE…KRSGAWFFKG (118 aa)) is the RabBD domain. The segment at 88-145 (GDGVNRCILCGEQLGMLGSACVVCEDCKKNVCTKCGVETSNNRPHPVWLCKICLEQRE) adopts an FYVE-type zinc-finger fold. Zn(2+) is bound by residues cysteine 94, cysteine 97, cysteine 111, cysteine 114, cysteine 119, cysteine 122, cysteine 137, and cysteine 140. The disordered stretch occupies residues 162-375 (VLPQPMPIKK…EEEANSYDSD (214 aa)). Residues 199 to 208 (ARGDMEDRRP) show a composition bias toward basic and acidic residues. Arginine 223 carries the post-translational modification Omega-N-methylarginine. Residues 243-252 (RDSEGWDHAH) show a composition bias toward basic and acidic residues. The residue at position 271 (serine 271) is a Phosphoserine. Over residues 278–296 (APAPVPSPAPPQPVQPGPP) the composition is skewed to pro residues. A compositionally biased stretch (low complexity) spans 347–356 (AAPYSQAAPA). The span at 362–375 (AEEEEEEANSYDSD) shows a compositional bias: acidic residues. Residues 379–501 (TLGALEFSLL…KANQRKNFNI (123 aa)) form the C2 1 domain. Ca(2+) contacts are provided by methionine 409, aspartate 410, aspartate 416, aspartate 471, glutamate 472, aspartate 473, glutamate 479, glutamate 526, aspartate 568, aspartate 574, aspartate 628, tyrosine 629, aspartate 630, and aspartate 636. A C2 2 domain is found at 537-670 (ERGKILVSLM…NKDKKIERWH (134 aa)). A phosphoserine mark is found at serine 679 and serine 680.

Interacts with RAB3B, RAB3C, RAB3D, RAB8A, RAB27A and RAB27B. Interacts with RAB3A; this interaction recruits RPH3A to synaptic vesicules. Interacts (via C2B domain) with SNAP25. Interacts with deubiquitinating enzyme CAND1; this interaction results in the deubiquitination of RPH3A. Interacts with GRIN2A and DLG4; this ternary complex regulates NMDA receptor composition at postsynaptic membranes. Interacts with SNCA. Requires Ca(2+) as cofactor. Ubiquitinated. Deubiquitinated by CAND1 to prevent its degradation. As to expression, specifically expressed in brain.

Its subcellular location is the cytoplasmic vesicle. The protein resides in the secretory vesicle. The protein localises to the synaptic vesicle membrane. It is found in the cell projection. It localises to the dendritic spine. Its subcellular location is the postsynaptic cell membrane. The protein resides in the membrane. In terms of biological role, plays an essential role in docking and fusion steps of regulated exocytosis. At the presynaptic level, RPH3A is recruited by RAB3A to the synaptic vesicle membrane in a GTP-dependent manner where it modulates synaptic vesicle trafficking and calcium-triggered neurotransmitter release. In the post-synaptic compartment, forms a ternary complex with GRIN2A and DLG4 and regulates NMDA receptor stability. Also plays a role in the exocytosis of arginine vasopressin hormone. This Mus musculus (Mouse) protein is Rabphilin-3A (Rph3a).